Here is a 50-residue protein sequence, read N- to C-terminus: Inducible serine protease inhibitor 1 (50 aa).

The disordered stretch occupies residues 1–27 (DLVXGTNFXKNNPXSTRVAANSXRSPS). A compositionally biased stretch (polar residues) spans 8–25 (FXKNNPXSTRVAANSXRS).

In terms of biological role, inhibits trypsin and the toxin protease PR2 of M.anisopliae. Does not inhibit chymotrypsin, subtilisin Carlsberg, proteinase K, porcine pancreatic elastase and the toxin protease PR1 of M.anisopliae. The chain is Inducible serine protease inhibitor 1 from Galleria mellonella (Greater wax moth).